A 380-amino-acid chain; its full sequence is Cystathionine beta-lyase (380 aa).

Lys196 carries the N6-(pyridoxal phosphate)lysine modification.

This sequence belongs to the trans-sulfuration enzymes family. Pyridoxal 5'-phosphate serves as cofactor.

The protein localises to the cytoplasm. The enzyme catalyses L,L-cystathionine + H2O = L-homocysteine + pyruvate + NH4(+). The catalysed reaction is an S-substituted L-cysteine + H2O = a thiol + pyruvate + NH4(+). It participates in amino-acid biosynthesis; L-methionine biosynthesis via de novo pathway; L-homocysteine from L-cystathionine: step 1/1. Its function is as follows. The enzymatic degradation of amino acids in cheese is believed to generate aroma compounds and therefore to be essential for flavor development. Cystathionine beta-lyase (CBL) can convert cystathionine to homocysteine but is also able to catalyze an alpha, gamma elimination. With methionine as a substrate, it produces volatile sulfur compounds which are important for flavor formation in Gouda cheese. This Lactococcus lactis subsp. cremoris (Streptococcus cremoris) protein is Cystathionine beta-lyase (metC).